The primary structure comprises 178 residues: MRGLLVGRMQPFHRGHLQVIKSILEEVDELIICIGSAQLSHSIRDPFTAGERVMMLTKALSENGIPASRYYIIPVQDIECNALWVGHIKMLTPPFDRVYSGNPLVQRLFSEDGYEVTAPPLFYRDRYSGTEVRRRMLDDGDWRSLLPESVVEVIDEINGVERIKHLAKKEVSELGGIS.

Belongs to the archaeal NMN adenylyltransferase family. Homohexamer.

Its subcellular location is the cytoplasm. The enzyme catalyses beta-nicotinamide D-ribonucleotide + ATP + H(+) = diphosphate + NAD(+). The protein operates within cofactor biosynthesis; NAD(+) biosynthesis; NAD(+) from nicotinamide D-ribonucleotide: step 1/1. The polypeptide is Nicotinamide-nucleotide adenylyltransferase (Methanothermobacter thermautotrophicus (strain ATCC 29096 / DSM 1053 / JCM 10044 / NBRC 100330 / Delta H) (Methanobacterium thermoautotrophicum)).